Reading from the N-terminus, the 387-residue chain is Methylthioribose-1-phosphate isomerase (387 aa).

The Proton donor role is filled by Asp-257.

The protein belongs to the eIF-2B alpha/beta/delta subunits family. MtnA subfamily.

The protein localises to the cytoplasm. The protein resides in the nucleus. The enzyme catalyses 5-(methylsulfanyl)-alpha-D-ribose 1-phosphate = 5-(methylsulfanyl)-D-ribulose 1-phosphate. It participates in amino-acid biosynthesis; L-methionine biosynthesis via salvage pathway; L-methionine from S-methyl-5-thio-alpha-D-ribose 1-phosphate: step 1/6. Catalyzes the interconversion of methylthioribose-1-phosphate (MTR-1-P) into methylthioribulose-1-phosphate (MTRu-1-P). The chain is Methylthioribose-1-phosphate isomerase (mri1) from Aspergillus fumigatus (strain CBS 144.89 / FGSC A1163 / CEA10) (Neosartorya fumigata).